A 314-amino-acid chain; its full sequence is Olfactory receptor 1468 (314 aa).

At 1-25 the chain is on the extracellular side; that stretch reads MTEENQTVISQFLLLGLPIPSEHQH. A glycan (N-linked (GlcNAc...) asparagine) is linked at Asn-5. The chain crosses the membrane as a helical span at residues 26 to 49; it reads VFYALFLSMYLTTVLGNLIIIILI. Residues 50 to 57 lie on the Cytoplasmic side of the membrane; it reads HLDSHLHT. A helical membrane pass occupies residues 58-79; the sequence is PMYLFLSNLSFSDLCFSSVTMP. At 80-100 the chain is on the extracellular side; sequence KLLQNMQSQVPSIPFAGCLTQ. Cys-97 and Cys-189 are joined by a disulfide. The chain crosses the membrane as a helical span at residues 101–120; the sequence is LYFYLYFADLESFLLVAMAY. At 121 to 139 the chain is on the cytoplasmic side; it reads DRYVAICFPLHYMSIMSPK. Residues 140–158 form a helical membrane-spanning segment; sequence LCVSLVVLSWVLTTFHAML. Over 159 to 196 the chain is Extracellular; sequence HTLLMARLSFCADNMIPHFFCDISPLLKLSCSDTHVNE. A helical membrane pass occupies residues 197–219; the sequence is LVIFVMGGLVIVIPFVLIIVSYA. Residues 220–236 are Cytoplasmic-facing; that stretch reads RVVASILKVPSVRGIHK. A helical membrane pass occupies residues 237–260; that stretch reads IFSTCGSHLSVVSLFYGTIIGLYL. Over 261-272 the chain is Extracellular; sequence CPSANNSTVKET. A helical transmembrane segment spans residues 273-292; that stretch reads VMAMMYTVVTPMLNPFIYSL. Over 293–314 the chain is Cytoplasmic; that stretch reads RNRDMKEALIRVLCKKKITFCL.

The protein belongs to the G-protein coupled receptor 1 family. In terms of tissue distribution, olfactory epithelium.

The protein localises to the cell membrane. Functionally, odorant receptor. The polypeptide is Olfactory receptor 1468 (Olr1468) (Rattus norvegicus (Rat)).